The sequence spans 744 residues: TonB-dependent heme receptor A (744 aa).

The N-terminal stretch at methionine 1 to alanine 24 is a signal peptide. The TBDR plug domain maps to aspartate 45–lysine 157. Positions lysine 168–phenylalanine 744 constitute a TBDR beta-barrel domain.

Belongs to the TonB-dependent receptor family.

The protein resides in the cell outer membrane. Its function is as follows. Heme receptor. The chain is TonB-dependent heme receptor A (tdhA) from Haemophilus influenzae (strain ATCC 51907 / DSM 11121 / KW20 / Rd).